The chain runs to 401 residues: Argininosuccinate synthase (401 aa).

Residue 8–16 (AYSGGLDTS) participates in ATP binding. Tyr-85 lines the L-citrulline pocket. Gly-115 is a binding site for ATP. L-aspartate contacts are provided by Thr-117, Asn-121, and Asp-122. L-citrulline is bound at residue Asn-121. 4 residues coordinate L-citrulline: Arg-125, Ser-173, Glu-258, and Tyr-270.

The protein belongs to the argininosuccinate synthase family. Type 1 subfamily. In terms of assembly, homotetramer.

The protein localises to the cytoplasm. It catalyses the reaction L-citrulline + L-aspartate + ATP = 2-(N(omega)-L-arginino)succinate + AMP + diphosphate + H(+). Its pathway is amino-acid biosynthesis; L-arginine biosynthesis; L-arginine from L-ornithine and carbamoyl phosphate: step 2/3. The protein is Argininosuccinate synthase of Staphylococcus aureus (strain MRSA252).